A 446-amino-acid chain; its full sequence is Movement protein TGB1 (446 aa).

The interval 40-60 (NKLDKRLQNTRKKNKNKEKTR) is disordered. In terms of domain architecture, (+)RNA virus helicase ATP-binding spans 160–303 (KACCKKERNQ…WLHVPIVFSS (144 aa)). 193 to 200 (GVPGSGKS) provides a ligand contact to ATP. Residues 304-444 (DSSHRFGPET…CYGEEHRPDE (141 aa)) enclose the (+)RNA virus helicase C-terminal domain.

It belongs to the virgaviridae/benyvirus TGB1 movement protein family. Homooligomer. Interacts with movement protein TGB3. TGB1-TGB3-TGB2 complex formation is enhanced by ATP hydrolysis. Interacts with the suppressor of RNA silencing (via N-terminus). Mg(2+) serves as cofactor.

It localises to the host cell junction. Its subcellular location is the host plasmodesma. The protein resides in the host nucleus. The protein localises to the host cytoplasm. It is found in the host nucleolus. It localises to the host cytoskeleton. The enzyme catalyses ATP + H2O = ADP + phosphate + H(+). Its function is as follows. Participates in the transport of viral genome to neighboring plant cells directly through plasmodesmata, without any budding. Multifunctional movement protein with RNA-binding, ATPase and helicase activities. Engages in homologous interactions leading to the formation of a ribonucleoprotein complex containing plus-sense viral RNAs (vRNPs). ATPase activity is probably required for vRNPs movement complex assembly. Intracellular delivery of TGBp1-containing vRNPs to plasmodesmata is facilitated by TGBp2 and TGBp3. This Arachis hypogaea (Peanut) protein is Movement protein TGB1.